A 229-amino-acid chain; its full sequence is Rhamnosyl O-methyltransferase (229 aa).

A signal peptide spans 1–23 (MERVRQMFSCVSGMIYRPTDSIA).

This sequence belongs to the rhamnosyl O-methyltransferase family.

In terms of biological role, catalyzes the O-methylation of the hydroxyl group located on C-2 of the first rhamnosyl residue linked to the phenolic group of glycosylated phenolphthiocerol dimycocerosates (PGL) and p-hydroxybenzoic acid derivatives (p-HBAD). In Mycobacterium leprae (strain TN), this protein is Rhamnosyl O-methyltransferase.